Consider the following 80-residue polypeptide: Small ribosomal subunit protein bS18A (80 aa).

The protein belongs to the bacterial ribosomal protein bS18 family. In terms of assembly, part of the 30S ribosomal subunit. Forms a tight heterodimer with protein bS6.

Functionally, binds as a heterodimer with protein bS6 to the central domain of the 16S rRNA, where it helps stabilize the platform of the 30S subunit. The chain is Small ribosomal subunit protein bS18A from Rhodococcus jostii (strain RHA1).